The sequence spans 404 residues: MAWSTRTMMSLALYTCFLWLLTSGLKTVQSLHDSHRGLAPTNVDFAFNMYRHLSTLDPHKNILISPVSVSMALAMMSLVAVGSKKNQFFQDVGFNLTEISKEEIYQSFEKLSHLLSKADSSLEMRMGNTMFLDQSLNMRDSFLTDIEHYHESEALTTDFKDGADAREHINRHVETKTQGEITHVFSDQDSPAPLTLVNYNVLKGMWELPISPENTRDEDFHVSENSTVRVPMMFQSGVIGYLHDSEIPCQLVQMQYLKNGTTFFILPDEGQMDAVTAALHRDTVERWDKLLTKRLVNLYIPRVYMSGTYNLEDVLEGMGITGLFTNQTDFLDISQDPPQKASKIVHKVMLQLDEKDEPPVTTTEAPPQTTSEPLTLTFNKPFIIMMFDSFTWSSLLLGKIMNPA.

An N-terminal signal peptide occupies residues 1 to 30; it reads MAWSTRTMMSLALYTCFLWLLTSGLKTVQS. Residues asparagine 95 and asparagine 225 are each glycosylated (N-linked (GlcNAc...) asparagine). Residue glutamine 253 participates in cortisol binding. Asparagine 259 carries N-linked (GlcNAc...) asparagine glycosylation. Position 285 (glutamate 285) interacts with cortisol. Asparagine 326 carries an N-linked (GlcNAc...) asparagine glycan. A cortisol-binding site is contributed by tryptophan 392.

It belongs to the serpin family. In terms of tissue distribution, expressed by the liver; secreted in plasma.

Its subcellular location is the secreted. Functionally, major transport protein for glucocorticoids and progestins in the blood of almost all vertebrate species. The sequence is that of Corticosteroid-binding globulin (SERPINA6) from Mesocricetus auratus (Golden hamster).